Here is a 238-residue protein sequence, read N- to C-terminus: Ubiquitin-conjugating enzyme E2 R2 (238 aa).

The region spanning 8–174 is the UBC core domain; the sequence is SSQKALMLEL…IRKQVSATKA (167 aa). Cys-93 serves as the catalytic Glycyl thioester intermediate. The segment at 98-113 is important for ubiquitin transfer; sequence HPPVDDPQSGELPSER. The interval 194-238 is disordered; that stretch reads TKVPSNDNSSDLLYDDLYDDDIDDEDEEEEDADCYDDDDSGNEES. Residues 206 to 238 show a composition bias toward acidic residues; it reads LYDDLYDDDIDDEDEEEEDADCYDDDDSGNEES. At Ser-233 the chain carries Phosphoserine; by CK2.

Belongs to the ubiquitin-conjugating enzyme family. As to quaternary structure, interacts with multiple Cul1-RING E3 ubiquitin-protein ligase complexes, also known as SCF (SKP1-CUL1-F-box protein) complexes, including SCF(FBXW7) and SCF(BTRC). Interacts with multiple Cul2-RING (CRL2) E3 ubiquitin-protein ligase complexes, also known as ECS (Elongin BC-CUL2/5-SOCS-box protein) complexes, including CRL2(FEM1C) and ECS(VHL). When phosphorylated, interacts with beta-TrCP (BTRC).

It carries out the reaction S-ubiquitinyl-[E1 ubiquitin-activating enzyme]-L-cysteine + [E2 ubiquitin-conjugating enzyme]-L-cysteine = [E1 ubiquitin-activating enzyme]-L-cysteine + S-ubiquitinyl-[E2 ubiquitin-conjugating enzyme]-L-cysteine.. It functions in the pathway protein modification; protein ubiquitination. Neddylation of CUL2 in the CRL2(FEM1C) E3 ligase complex increases substrate affinity of UBE2R2 and the ubiquitin-transfer rate in the E2-E3 complex. Functionally, E2 ubiquitin-conjugating enzyme that accepts ubiquitin from an E1 ubiquitin-activating protein, and catalyzes its covalent attachment to other proteins by an E3 ubiquitin-protein ligase complex. In vitro catalyzes monoubiquitination and 'Lys-48'-linked polyubiquitination. Works in collaboration with various Cul1-RING and Cul2-RING E3 ligase complexes. May be involved in degradation of katenin. The polypeptide is Ubiquitin-conjugating enzyme E2 R2 (UBE2R2) (Homo sapiens (Human)).